We begin with the raw amino-acid sequence, 351 residues long: Type II restriction enzyme NmeDI (351 aa).

The enzyme catalyses Endonucleolytic cleavage of DNA to give specific double-stranded fragments with terminal 5'-phosphates.. In terms of biological role, a P subtype restriction enzyme that recognizes the double-stranded sequence 5'-N(12)RCCGGYN(12)-3' and cleaves on both sides of the recognition sequence. The protein is Type II restriction enzyme NmeDI (nmeDIRP) of Neisseria meningitidis serogroup C.